The primary structure comprises 737 residues: Oligopeptide transporter 3 (737 aa).

The next 16 helical transmembrane spans lie at 45–65, 69–89, 117–137, 153–173, 215–235, 255–275, 289–309, 357–377, 418–438, 446–466, 478–498, 532–552, 604–624, 629–649, 650–670, and 681–701; these read AWFL…FFTY, PLTI…KFMA, VIIT…AYSI, FICG…WAGI, FLVA…LFPI, VGSG…AGIS, ILNV…VCYW, LYLS…FTAT, WWFY…SFVW, WWGM…IGVI, IIGQ…NLIF, AQLV…WWML, VWLF…SKIF, WIPL…PPAT, PTNI…VFNY, and VLSA…FFAL.

The protein belongs to the oligopeptide OPT transporter (TC 2.A.67.1) family. Strong expression in flowers, leaves and roots. Preferentially expressed in the vascular tissues of seedlings and mature plants as well as in pollen and developing embryos.

The protein resides in the membrane. May be involved in the translocation of tetra- and pentapeptides across the cellular membrane in an energy-dependent manner. Also acts as a metal transporter that could be a component of the copper transport machinery. Essential for early embryo development. This is Oligopeptide transporter 3 (OPT3) from Arabidopsis thaliana (Mouse-ear cress).